Here is a 366-residue protein sequence, read N- to C-terminus: Ribosomal RNA large subunit methyltransferase M (366 aa).

S-adenosyl-L-methionine-binding positions include S188, 221-224 (CPGG), D240, D260, and D277. The active-site Proton acceptor is K306.

This sequence belongs to the class I-like SAM-binding methyltransferase superfamily. RNA methyltransferase RlmE family. RlmM subfamily. In terms of assembly, monomer.

Its subcellular location is the cytoplasm. It carries out the reaction cytidine(2498) in 23S rRNA + S-adenosyl-L-methionine = 2'-O-methylcytidine(2498) in 23S rRNA + S-adenosyl-L-homocysteine + H(+). Catalyzes the 2'-O-methylation at nucleotide C2498 in 23S rRNA. This Erwinia tasmaniensis (strain DSM 17950 / CFBP 7177 / CIP 109463 / NCPPB 4357 / Et1/99) protein is Ribosomal RNA large subunit methyltransferase M.